The chain runs to 253 residues: Triosephosphate isomerase (253 aa).

9–11 (NWK) is a binding site for substrate. Catalysis depends on H95, which acts as the Electrophile. Residue E167 is the Proton acceptor of the active site. Substrate-binding positions include G173, S213, and 234–235 (GG). S213 carries the post-translational modification Phosphoserine.

This sequence belongs to the triosephosphate isomerase family. As to quaternary structure, homodimer.

The protein resides in the cytoplasm. The catalysed reaction is D-glyceraldehyde 3-phosphate = dihydroxyacetone phosphate. It functions in the pathway carbohydrate biosynthesis; gluconeogenesis. The protein operates within carbohydrate degradation; glycolysis; D-glyceraldehyde 3-phosphate from glycerone phosphate: step 1/1. Involved in the gluconeogenesis. Catalyzes stereospecifically the conversion of dihydroxyacetone phosphate (DHAP) to D-glyceraldehyde-3-phosphate (G3P). The polypeptide is Triosephosphate isomerase (Geobacillus thermodenitrificans (strain NG80-2)).